A 157-amino-acid chain; its full sequence is Crossover junction endodeoxyribonuclease RuvC (157 aa).

Active-site residues include Asp-7, Glu-66, and Asp-139. Mg(2+)-binding residues include Asp-7, Glu-66, and Asp-139.

It belongs to the RuvC family. Homodimer which binds Holliday junction (HJ) DNA. The HJ becomes 2-fold symmetrical on binding to RuvC with unstacked arms; it has a different conformation from HJ DNA in complex with RuvA. In the full resolvosome a probable DNA-RuvA(4)-RuvB(12)-RuvC(2) complex forms which resolves the HJ. Mg(2+) is required as a cofactor.

It is found in the cytoplasm. The enzyme catalyses Endonucleolytic cleavage at a junction such as a reciprocal single-stranded crossover between two homologous DNA duplexes (Holliday junction).. Functionally, the RuvA-RuvB-RuvC complex processes Holliday junction (HJ) DNA during genetic recombination and DNA repair. Endonuclease that resolves HJ intermediates. Cleaves cruciform DNA by making single-stranded nicks across the HJ at symmetrical positions within the homologous arms, yielding a 5'-phosphate and a 3'-hydroxyl group; requires a central core of homology in the junction. The consensus cleavage sequence is 5'-(A/T)TT(C/G)-3'. Cleavage occurs on the 3'-side of the TT dinucleotide at the point of strand exchange. HJ branch migration catalyzed by RuvA-RuvB allows RuvC to scan DNA until it finds its consensus sequence, where it cleaves and resolves the cruciform DNA. This is Crossover junction endodeoxyribonuclease RuvC from Helicobacter acinonychis (strain Sheeba).